The primary structure comprises 74 residues: Control protein C.MunI (74 aa).

The 56-residue stretch at 12 to 67 folds into the HTH cro/C1-type domain; sequence LKKLRKEKTDLSQESFAAQIDLDRTYYSSIENGKRNVSLVNLEKISAGLGITLSEL. Residues 23-42 constitute a DNA-binding region (H-T-H motif); sequence SQESFAAQIDLDRTYYSSIE.

Functionally, probably controls expression of its associated restriction-modification system MunI. The sequence is that of Control protein C.MunI from Mycoplasma sp.